We begin with the raw amino-acid sequence, 87 residues long: Kappa-2-bungarotoxin (87 aa).

Positions 1–21 (MKTLLLTLVVVTIVCLDLGYT) are cleaved as a signal peptide. 5 disulfides stabilise this stretch: cysteine 24/cysteine 42, cysteine 35/cysteine 63, cysteine 48/cysteine 52, cysteine 67/cysteine 79, and cysteine 80/cysteine 85.

This sequence belongs to the three-finger toxin family. Long-chain subfamily. Kappa-neurotoxin sub-subfamily. As to quaternary structure, homodimer and heterodimer with kappa 3-bungarotoxin; non-covalently linked. As to expression, expressed by the venom gland.

It is found in the secreted. Functionally, postsynaptic neurotoxin that binds and inhibits neuronal nicotinic acetylcholine receptors (nAChR) with high affinity (IC(50)&lt;100 nM). Is a selective, and slowly reversible antagonist of alpha-3/CHRNA3-containing and some alpha-4/CHRNA4-containing AChRs. This chain is Kappa-2-bungarotoxin, found in Bungarus multicinctus (Many-banded krait).